We begin with the raw amino-acid sequence, 113 residues long: MHEMSIVEGIRTAIEEAARANGFAKVTRVRLEIGRLAGVERAALDFAFDVVLRGSLAEGAAVQIIDLPGQAACFDCGKTVEIEHRLDICPECGGTRLLVQGGDEMRIKDLEVL.

Residue His2 participates in Ni(2+) binding. Zn(2+) is bound by residues Cys73, Cys76, Cys89, and Cys92.

It belongs to the HypA/HybF family.

In terms of biological role, involved in the maturation of [NiFe] hydrogenases. Required for nickel insertion into the metal center of the hydrogenase. The sequence is that of Hydrogenase maturation factor HypA from Rhodobacter capsulatus (Rhodopseudomonas capsulata).